An 87-amino-acid chain; its full sequence is Phosphoribosyl-ATP pyrophosphatase (87 aa).

The protein belongs to the PRA-PH family.

Its subcellular location is the cytoplasm. It carries out the reaction 1-(5-phospho-beta-D-ribosyl)-ATP + H2O = 1-(5-phospho-beta-D-ribosyl)-5'-AMP + diphosphate + H(+). It functions in the pathway amino-acid biosynthesis; L-histidine biosynthesis; L-histidine from 5-phospho-alpha-D-ribose 1-diphosphate: step 2/9. This Thermobifida fusca (strain YX) protein is Phosphoribosyl-ATP pyrophosphatase.